The sequence spans 596 residues: Elongation factor 4 (596 aa).

The tr-type G domain maps to 2 to 184; sequence KHIRNFSIIA…TIVAQIPSPE (183 aa). GTP is bound by residues 14 to 19 and 131 to 134; these read DHGKST and NKID.

This sequence belongs to the TRAFAC class translation factor GTPase superfamily. Classic translation factor GTPase family. LepA subfamily.

It is found in the cell inner membrane. It carries out the reaction GTP + H2O = GDP + phosphate + H(+). Its function is as follows. Required for accurate and efficient protein synthesis under certain stress conditions. May act as a fidelity factor of the translation reaction, by catalyzing a one-codon backward translocation of tRNAs on improperly translocated ribosomes. Back-translocation proceeds from a post-translocation (POST) complex to a pre-translocation (PRE) complex, thus giving elongation factor G a second chance to translocate the tRNAs correctly. Binds to ribosomes in a GTP-dependent manner. The sequence is that of Elongation factor 4 from Shewanella amazonensis (strain ATCC BAA-1098 / SB2B).